We begin with the raw amino-acid sequence, 47 residues long: Turripeptide Ici9.1 (47 aa).

3 disulfides stabilise this stretch: C1/C31, C5/C24, and C13/C45. Residues 1–47 (CLSVCSMEYWPVCGSDGKTYPNECHLTSEACMSNTDITVAHVGKCDQ) enclose the Kazal-like domain.

This sequence belongs to the conopeptide P-like superfamily. In terms of tissue distribution, expressed by the venom duct.

The protein localises to the secreted. In terms of biological role, acts as a neurotoxin by inhibiting an ion channel. May also act as a serine protease inhibitor, since it possess the kazal serine protease inhibitor signature. This is Turripeptide Ici9.1 from Iotyrris cingulifera (Sea snail).